The chain runs to 1538 residues: Pentafunctional AROM polypeptide (1538 aa).

The 3-dehydroquinate synthase stretch occupies residues 1-384 (MGVPTKISIL…HEPRASTVSN (384 aa)). Residues 44–46 (DTN), 81–84 (ESSK), 114–116 (GGV), and Asp119 contribute to the NAD(+) site. Position 130 (Arg130) interacts with 7-phospho-2-dehydro-3-deoxy-D-arabino-heptonate. Residue 139 to 140 (TT) coordinates NAD(+). Residues Asp146 and Lys152 each contribute to the 7-phospho-2-dehydro-3-deoxy-D-arabino-heptonate site. Residue Lys161 coordinates NAD(+). 7-phospho-2-dehydro-3-deoxy-D-arabino-heptonate is bound at residue Asn162. Residues 179–182 (FLNT) and Asn190 contribute to the NAD(+) site. Glu194 serves as a coordination point for Zn(2+). 7-phospho-2-dehydro-3-deoxy-D-arabino-heptonate-binding positions include 194–197 (EVIK) and Lys250. Glu260 functions as the Proton acceptor; for 3-dehydroquinate synthase activity in the catalytic mechanism. Residues 264-268 (RNLLN) and His271 contribute to the 7-phospho-2-dehydro-3-deoxy-D-arabino-heptonate site. Residue His271 participates in Zn(2+) binding. Residue His275 is the Proton acceptor; for 3-dehydroquinate synthase activity of the active site. The 7-phospho-2-dehydro-3-deoxy-D-arabino-heptonate site is built by His287 and Lys356. Position 287 (His287) interacts with Zn(2+). The segment at 397-842 (VSPGVPKGLD…WDCLSQTFKV (446 aa)) is EPSP synthase. Cys824 serves as the catalytic For EPSP synthase activity. The segment at 866–973 (ASIFIIGMRG…RRKQNTFFVS (108 aa)) is shikimate kinase. Position 872–879 (872–879 (GMRGAGKT)) interacts with ATP. Positions 974–1194 (LTLPDLGLAA…AAPGQLSARE (221 aa)) are 3-dehydroquinase. His1097 functions as the Proton acceptor; for 3-dehydroquinate dehydratase activity in the catalytic mechanism. The active-site Schiff-base intermediate with substrate; for 3-dehydroquinate dehydratase activity is Lys1125. Residues 1207–1538 (AKKFAVIGNP…YEHPVLNHSS (332 aa)) form a shikimate dehydrogenase region.

In the N-terminal section; belongs to the sugar phosphate cyclases superfamily. Dehydroquinate synthase family. This sequence in the 2nd section; belongs to the EPSP synthase family. It in the 3rd section; belongs to the shikimate kinase family. The protein in the 4th section; belongs to the type-I 3-dehydroquinase family. In the C-terminal section; belongs to the shikimate dehydrogenase family. As to quaternary structure, homodimer. Zn(2+) is required as a cofactor.

It is found in the cytoplasm. The catalysed reaction is 7-phospho-2-dehydro-3-deoxy-D-arabino-heptonate = 3-dehydroquinate + phosphate. The enzyme catalyses 3-dehydroquinate = 3-dehydroshikimate + H2O. It carries out the reaction shikimate + NADP(+) = 3-dehydroshikimate + NADPH + H(+). It catalyses the reaction shikimate + ATP = 3-phosphoshikimate + ADP + H(+). The catalysed reaction is 3-phosphoshikimate + phosphoenolpyruvate = 5-O-(1-carboxyvinyl)-3-phosphoshikimate + phosphate. Its pathway is metabolic intermediate biosynthesis; chorismate biosynthesis; chorismate from D-erythrose 4-phosphate and phosphoenolpyruvate: step 2/7. It participates in metabolic intermediate biosynthesis; chorismate biosynthesis; chorismate from D-erythrose 4-phosphate and phosphoenolpyruvate: step 3/7. The protein operates within metabolic intermediate biosynthesis; chorismate biosynthesis; chorismate from D-erythrose 4-phosphate and phosphoenolpyruvate: step 4/7. It functions in the pathway metabolic intermediate biosynthesis; chorismate biosynthesis; chorismate from D-erythrose 4-phosphate and phosphoenolpyruvate: step 5/7. Its pathway is metabolic intermediate biosynthesis; chorismate biosynthesis; chorismate from D-erythrose 4-phosphate and phosphoenolpyruvate: step 6/7. In terms of biological role, the AROM polypeptide catalyzes 5 consecutive enzymatic reactions in prechorismate polyaromatic amino acid biosynthesis. This Ajellomyces capsulatus (strain NAm1 / WU24) (Darling's disease fungus) protein is Pentafunctional AROM polypeptide.